Reading from the N-terminus, the 732-residue chain is Polyribonucleotide nucleotidyltransferase (732 aa).

The Mg(2+) site is built by aspartate 483 and aspartate 489. A KH domain is found at 550-609 (PRIVTVQIPVDKIGELIGPKGKNIRGIQDETGAELSVEDDGTVTIAAVGGDSMERAKQMV). Residues 619–687 (GETYEGTVKT…ERGRLRLSMK (69 aa)) form the S1 motif domain. Residues 684 to 732 (LSMKALLPKPEGMPDEPPQSERPRRDDGERSGGDRGGRGGRNGGGRDRR) are disordered. Residues 702-720 (QSERPRRDDGERSGGDRGG) show a composition bias toward basic and acidic residues.

Belongs to the polyribonucleotide nucleotidyltransferase family. Mg(2+) is required as a cofactor.

It is found in the cytoplasm. It carries out the reaction RNA(n+1) + phosphate = RNA(n) + a ribonucleoside 5'-diphosphate. Involved in mRNA degradation. Catalyzes the phosphorolysis of single-stranded polyribonucleotides processively in the 3'- to 5'-direction. The protein is Polyribonucleotide nucleotidyltransferase of Gemmatimonas aurantiaca (strain DSM 14586 / JCM 11422 / NBRC 100505 / T-27).